Consider the following 155-residue polypeptide: MGASVKPAARRNARQFALQAIYSWQITKENVATIEAQFLAGEKYDEEEHRAAEPALAAPETDVAYFRDLLTGVVLSHTELDSKIRPYVSRPMQDLDMMELALLRLAMYEMTRREDVPYKVVINEAIELAKVFAAEDSHKFVNGVLDKAAPHVRKK.

This sequence belongs to the NusB family.

Functionally, involved in transcription antitermination. Required for transcription of ribosomal RNA (rRNA) genes. Binds specifically to the boxA antiterminator sequence of the ribosomal RNA (rrn) operons. This chain is Transcription antitermination protein NusB, found in Vibrio vulnificus (strain CMCP6).